The following is a 99-amino-acid chain: Protein IDA-LIKE 3 (99 aa).

Positions Met-1–Gly-32 are cleaved as a signal peptide. The span at Thr-36–Pro-45 shows a compositional bias: polar residues. Disordered stretches follow at residues Thr-36–Val-58 and Ser-73–Thr-99. Positions Lys-46 to Val-58 are enriched in basic and acidic residues.

In terms of tissue distribution, expressed in flowers and seedlings. Detected at the base of pedicel, in the floral abscission zone and in vascular tissues.

The protein localises to the secreted. It is found in the extracellular space. May be involved in floral abscission. The protein is Protein IDA-LIKE 3 (IDL3) of Arabidopsis thaliana (Mouse-ear cress).